The following is a 105-amino-acid chain: Small ribosomal subunit protein uS10 (105 aa).

This sequence belongs to the universal ribosomal protein uS10 family. In terms of assembly, part of the 30S ribosomal subunit.

In terms of biological role, involved in the binding of tRNA to the ribosomes. The protein is Small ribosomal subunit protein uS10 of Chlamydia abortus (strain DSM 27085 / S26/3) (Chlamydophila abortus).